The chain runs to 149 residues: Nucleoside diphosphate kinase (149 aa).

ATP contacts are provided by Lys9, Phe57, Arg85, Thr91, Arg102, and Asn112. His115 serves as the catalytic Pros-phosphohistidine intermediate.

This sequence belongs to the NDK family. The cofactor is Mg(2+).

The protein localises to the cytoplasm. The catalysed reaction is a 2'-deoxyribonucleoside 5'-diphosphate + ATP = a 2'-deoxyribonucleoside 5'-triphosphate + ADP. It carries out the reaction a ribonucleoside 5'-diphosphate + ATP = a ribonucleoside 5'-triphosphate + ADP. Its function is as follows. Major role in the synthesis of nucleoside triphosphates other than ATP. The ATP gamma phosphate is transferred to the NDP beta phosphate via a ping-pong mechanism, using a phosphorylated active-site intermediate. This chain is Nucleoside diphosphate kinase, found in Methanosarcina barkeri (strain Fusaro / DSM 804).